A 335-amino-acid polypeptide reads, in one-letter code: Histidinol-phosphate aminotransferase (335 aa).

Lysine 202 bears the N6-(pyridoxal phosphate)lysine mark.

This sequence belongs to the class-II pyridoxal-phosphate-dependent aminotransferase family. Histidinol-phosphate aminotransferase subfamily. As to quaternary structure, homodimer. Pyridoxal 5'-phosphate serves as cofactor.

It carries out the reaction L-histidinol phosphate + 2-oxoglutarate = 3-(imidazol-4-yl)-2-oxopropyl phosphate + L-glutamate. Its pathway is amino-acid biosynthesis; L-histidine biosynthesis; L-histidine from 5-phospho-alpha-D-ribose 1-diphosphate: step 7/9. This Thermotoga neapolitana (strain ATCC 49049 / DSM 4359 / NBRC 107923 / NS-E) protein is Histidinol-phosphate aminotransferase.